The primary structure comprises 403 residues: Double C2-like domain-containing protein alpha (403 aa).

Residues 1–92 (MRGRRGDRMT…DSYDSDDTTA (92 aa)) form an interaction with UNC13D and DYNLT1 region. 2 C2 domains span residues 92 to 214 (ALGT…HFNI) and 254 to 387 (ERGR…ERWH). Asp123, Asp129, Asp184, Asp186, Asp285, Asp291, Asp345, Asp347, and Asp353 together coordinate Ca(2+). The tract at residues 218 to 403 (RQVPLPSPSS…PPAAGALPLA (186 aa)) is interaction with UNC13D.

Interacts (via N-terminus) with UNC13A. Interacts with cytoplasmic dynein light chain DYNLT1. Interacts with UNC13D. Ca(2+) serves as cofactor. Predominantly expressed in brain. Also found in non-neural tissues. Expressed in RBL-2H3 mast cell line.

The protein resides in the cytoplasmic vesicle. Its subcellular location is the secretory vesicle. It localises to the synaptic vesicle membrane. The protein localises to the synapse. It is found in the synaptosome. The protein resides in the lysosome. Functionally, calcium sensor which most probably regulates fusion of vesicles with membranes. Binds calcium and phospholipids. May be involved in calcium dependent neurotransmitter release through the interaction with UNC13A. May be involved in calcium-dependent spontaneous release of neurotransmitter in absence of action potentials in neuronal cells. Regulates Ca(2+)-dependent secretory lysosome exocytosis in mast cells. The polypeptide is Double C2-like domain-containing protein alpha (Doc2a) (Rattus norvegicus (Rat)).